A 93-amino-acid chain; its full sequence is YcgL domain-containing protein Ssed_2518 (93 aa).

The region spanning 1 to 85 is the YcgL domain; the sequence is MICAVYKSRR…PKVNLLEQHK (85 aa).

The chain is YcgL domain-containing protein Ssed_2518 from Shewanella sediminis (strain HAW-EB3).